The following is a 193-amino-acid chain: Bradykinin-potentiating and C-type natriuretic peptides (193 aa).

The signal sequence occupies residues 1–23 (MFVSRLAASGLLLLALLALSLDG). The propeptide occupies 24–27 (KPVH). The tract at residues 25 to 173 (PVHQSKPGRS…RMKGLAKKAM (149 aa)) is disordered. A Pyrrolidone carboxylic acid modification is found at Q28. 2 consecutive propeptides follow at residues 40–43 (LSAQ) and 58–64 (LSVQQWS). At Q65 the chain carries Pyrrolidone carboxylic acid. Residues 75 to 169 (VVVQPHESPA…GGARRMKGLA (95 aa)) constitute a propeptide that is removed on maturation. Residues 95 to 123 (SPGPEAASGPAAPHRLPKSKGASATSAAS) show a composition bias toward low complexity. Residues 125–150 (PMRDLRTDGKQERQKWGRMVQPDHHA) show a composition bias toward basic and acidic residues. A compositionally biased stretch (gly residues) spans 152 to 162 (PGGGGGGGGGA). Basic residues predominate over residues 163 to 173 (RRMKGLAKKAM). C177 and C193 are joined by a disulfide.

In the N-terminal section; belongs to the bradykinin-potentiating peptide family. The protein in the C-terminal section; belongs to the natriuretic peptide family. In terms of tissue distribution, expressed by the venom gland.

The protein localises to the secreted. Its function is as follows. Bradykinin-potentiating peptide both inhibits the activity of the angiotensin-converting enzyme (ACE) and enhances the action of bradykinin by inhibiting the peptidases that inactivate it. It acts as an indirect hypotensive agent. Neither synthetic Tf1, nor synthetic Tf2 show bradykinin-potentiating effects. Has a vasorelaxant activity in rat aortic strips and a diuretic potency in anesthetized rats. In terms of biological role, has a vasorelaxant activity in rat aortic strips and a diuretic potency in anesthetized rats. Is as potent as Tf-CNP. In Protobothrops flavoviridis (Habu), this protein is Bradykinin-potentiating and C-type natriuretic peptides.